Reading from the N-terminus, the 504-residue chain is ATP synthase subunit alpha (504 aa).

An ATP-binding site is contributed by 170–177 (GDRQTGKT).

Belongs to the ATPase alpha/beta chains family. In terms of assembly, F-type ATPases have 2 components, CF(1) - the catalytic core - and CF(0) - the membrane proton channel. CF(1) has five subunits: alpha(3), beta(3), gamma(1), delta(1), epsilon(1). CF(0) has three main subunits: a(1), b(2) and c(9-12). The alpha and beta chains form an alternating ring which encloses part of the gamma chain. CF(1) is attached to CF(0) by a central stalk formed by the gamma and epsilon chains, while a peripheral stalk is formed by the delta and b chains.

It is found in the cell membrane. The enzyme catalyses ATP + H2O + 4 H(+)(in) = ADP + phosphate + 5 H(+)(out). Produces ATP from ADP in the presence of a proton gradient across the membrane. The alpha chain is a regulatory subunit. The protein is ATP synthase subunit alpha of Shouchella clausii (strain KSM-K16) (Alkalihalobacillus clausii).